The chain runs to 129 residues: Large ribosomal subunit protein bL19 (129 aa).

Belongs to the bacterial ribosomal protein bL19 family.

This protein is located at the 30S-50S ribosomal subunit interface and may play a role in the structure and function of the aminoacyl-tRNA binding site. The chain is Large ribosomal subunit protein bL19 from Methylobacillus flagellatus (strain ATCC 51484 / DSM 6875 / VKM B-1610 / KT).